The chain runs to 444 residues: uncharacterized protein (444 aa).

Positions 1–11 (MASSAGRDKLR) are enriched in basic and acidic residues. Positions 1 to 35 (MASSAGRDKLRSRGQRVFAFGSSTPRDLSHMSKVP) are disordered.

This is an uncharacterized protein from Caenorhabditis elegans.